The sequence spans 542 residues: Polysialoglycoprotein (542 aa).

The N-terminal stretch at 1–21 is a signal peptide; the sequence is MIMGGVRELLLVVMTVGVVKV. Residues 22 to 120 constitute a propeptide that is removed on maturation; the sequence is SCYPVGKSQK…TSEAATGPSG (99 aa). Positions 70–542 are disordered; it reads EEYLETNEVE…GPSGDDAMDI (473 aa). Residues 78 to 95 show a composition bias toward polar residues; sequence VESQASPNHGSSPANDAL. Positions 97-106 are enriched in basic and acidic residues; it reads SEEKLRRVSS. Over residues 107–116 the composition is skewed to low complexity; sequence DDAATSEAAT. Tandem repeats lie at residues 121-133, 134-146, 147-159, 160-172, 173-185, 186-198, 199-211, 212-224, 225-237, 238-250, 251-263, 264-276, 277-289, 290-302, 303-315, 316-328, 329-341, 342-354, 355-367, 368-380, 381-393, 394-406, 407-419, 420-432, 433-445, 446-458, 459-471, 472-484, 485-497, 498-510, 511-523, and 524-536. Positions 121–536 are 32 X 13 AA tandem repeats of D-D-A-T-S-E-A-A-T-G-P-S-G; it reads DDATSEAATG…TSEAATGPSG (416 aa). O-linked (GalNAc...) threonine glycosylation is present at T124. A glycan (O-linked (GalNAc...) serine) is linked at S125. O-linked (GalNAc...) threonine glycosylation is found at T129 and T137. S138 is a glycosylation site (O-linked (GalNAc...) serine). O-linked (GalNAc...) threonine glycans are attached at residues T142 and T150. Residue S151 is glycosylated (O-linked (GalNAc...) serine). T155 and T163 each carry an O-linked (GalNAc...) threonine glycan. An O-linked (GalNAc...) serine glycan is attached at S164. O-linked (GalNAc...) threonine glycosylation is found at T168 and T176. Residue S177 is glycosylated (O-linked (GalNAc...) serine). O-linked (GalNAc...) threonine glycans are attached at residues T181 and T189. An O-linked (GalNAc...) serine glycan is attached at S190. O-linked (GalNAc...) threonine glycans are attached at residues T194 and T202. An O-linked (GalNAc...) serine glycan is attached at S203. Residues T207 and T215 are each glycosylated (O-linked (GalNAc...) threonine). O-linked (GalNAc...) serine glycosylation is present at S216. 2 O-linked (GalNAc...) threonine glycosylation sites follow: T220 and T228. S229 carries O-linked (GalNAc...) serine glycosylation. O-linked (GalNAc...) threonine glycosylation is found at T233 and T241. O-linked (GalNAc...) serine glycosylation is present at S242. O-linked (GalNAc...) threonine glycans are attached at residues T246 and T254. S255 is a glycosylation site (O-linked (GalNAc...) serine). 2 O-linked (GalNAc...) threonine glycosylation sites follow: T259 and T267. S268 is a glycosylation site (O-linked (GalNAc...) serine). 2 O-linked (GalNAc...) threonine glycosylation sites follow: T272 and T280. S281 is a glycosylation site (O-linked (GalNAc...) serine). Residues T285 and T293 are each glycosylated (O-linked (GalNAc...) threonine). O-linked (GalNAc...) serine glycosylation is present at S294. O-linked (GalNAc...) threonine glycans are attached at residues T298 and T306. The O-linked (GalNAc...) serine glycan is linked to S307. 2 O-linked (GalNAc...) threonine glycosylation sites follow: T311 and T319. S320 carries O-linked (GalNAc...) serine glycosylation. T324 and T332 each carry an O-linked (GalNAc...) threonine glycan. A glycan (O-linked (GalNAc...) serine) is linked at S333. 2 O-linked (GalNAc...) threonine glycosylation sites follow: T337 and T345. S346 is a glycosylation site (O-linked (GalNAc...) serine). O-linked (GalNAc...) threonine glycosylation is found at T350 and T358. The O-linked (GalNAc...) serine glycan is linked to S359. O-linked (GalNAc...) threonine glycans are attached at residues T363 and T371. An O-linked (GalNAc...) serine glycan is attached at S372. O-linked (GalNAc...) threonine glycosylation is found at T376 and T384. S385 is a glycosylation site (O-linked (GalNAc...) serine). 2 O-linked (GalNAc...) threonine glycosylation sites follow: T389 and T397. A glycan (O-linked (GalNAc...) serine) is linked at S398. O-linked (GalNAc...) threonine glycosylation is found at T402 and T410. O-linked (GalNAc...) serine glycosylation is present at S411. O-linked (GalNAc...) threonine glycosylation is found at T415 and T423. O-linked (GalNAc...) serine glycosylation occurs at S424. O-linked (GalNAc...) threonine glycosylation is found at T428 and T436. A glycan (O-linked (GalNAc...) serine) is linked at S437. O-linked (GalNAc...) threonine glycans are attached at residues T441 and T449. Residue S450 is glycosylated (O-linked (GalNAc...) serine). O-linked (GalNAc...) threonine glycans are attached at residues T454 and T462. An O-linked (GalNAc...) serine glycan is attached at S463. Residues T467 and T475 are each glycosylated (O-linked (GalNAc...) threonine). Residue S476 is glycosylated (O-linked (GalNAc...) serine). O-linked (GalNAc...) threonine glycosylation is found at T480 and T488. An O-linked (GalNAc...) serine glycan is attached at S489. 2 O-linked (GalNAc...) threonine glycosylation sites follow: T493 and T501. O-linked (GalNAc...) serine glycosylation is present at S502. Residues T506 and T514 are each glycosylated (O-linked (GalNAc...) threonine). The O-linked (GalNAc...) serine glycan is linked to S515. 2 O-linked (GalNAc...) threonine glycosylation sites follow: T519 and T527. O-linked (GalNAc...) serine glycosylation is present at S528. T532 carries an O-linked (GalNAc...) threonine glycan. The propeptide occupies 537 to 542; it reads DDAMDI.

Post-translationally, most sialic acid residues exist in the form of polysialyl groups partly capped with deaminoneuraminic acid. As to expression, cortical alveoli of immature ovaries.

Functionally, in response to egg activation, PSGP is discharged by exocytosis into the perivitelline space, where it undergoes rapid proteolysis into glycotridecapeptides. During fertilization and/or early development the glycotridecapeptides prevent polyspermy or are involved in the formation of a fertilization membrane. In Oncorhynchus mykiss (Rainbow trout), this protein is Polysialoglycoprotein.